Consider the following 210-residue polypeptide: Protein GET1 (210 aa).

Residues 1 to 4 (MASL) lie on the Lumenal side of the membrane. The chain crosses the membrane as a helical span at residues 5-24 (LIIVFLSHVVTYLINTIGAT). Topologically, residues 25-110 (TVDNLLWLLY…SFDLTVKSVR (86 aa)) are cytoplasmic. Residues 43–97 (RTAVEQRRLKGEVVQLKREMKSTSSQDEFAKWAKLRRRHDKAMEEYEAKNKALGK) adopt a coiled-coil conformation. The helical transmembrane segment at 111 to 131 (FFSTTGLKFFLQFWYSKTPMF) threads the bilayer. At 132–155 (ELPRGWVPWQVEWVLSFPRAPLGT) the chain is on the lumenal side. The chain crosses the membrane as a helical span at residues 156 to 172 (VSIQVWSGVCTTVVSLA). Residues 173–210 (GDALGVVIQSLILKMTKRGVARTSEGRPSQPMALKKEL) are Cytoplasmic-facing.

Belongs to the WRB/GET1 family. In terms of assembly, interacts with GET3.

The protein localises to the endoplasmic reticulum membrane. Functionally, required for the post-translational delivery of tail-anchored (TA) proteins to the endoplasmic reticulum. Acts as a membrane receptor for soluble GET3, which recognizes and selectively binds the transmembrane domain of TA proteins in the cytosol. The chain is Protein GET1 from Uncinocarpus reesii (strain UAMH 1704).